The following is a 113-amino-acid chain: RING-box protein 2 (113 aa).

The segment at 1–26 is disordered; sequence MADVEDGEEPCVLSSHSGSAGSKSGG. At Ala-2 the chain carries N-acetylalanine. Zn(2+) contacts are provided by Cys-50, Cys-53, Cys-61, Cys-64, Cys-73, Cys-80, His-82, His-85, Cys-87, Cys-88, Cys-99, and Cys-102. The RING-type zinc-finger motif lies at 61–103; sequence CLRCQAENKQEDCVVVWGECNHSFHNCCMSLWVKQNNRCPLCQ.

It belongs to the RING-box family. Catalytic component of multiple cullin-5-RING E3 ubiquitin-protein ligase complexes (ECS complexes, also named CRL5 complexes) composed of CUL5, Elongin BC (ELOB and ELOC), RNF7/RBX2 and a variable SOCS box domain-containing protein as substrate-specific recognition component. Also interacts (with lower preference) with CUL1, CUL2, CUL3, CUL4A and CUL4B; additional evidence is however required to confirm this result in vivo. Interacts with UBE2F. Interacts with CSNK2B, the interaction is not affected by phosphorylation by CK2. May also interact with DCUN1D1, DCUN1D2, DCUN1D3, DCUN1D4 and DCUN1D5.

It is found in the cytoplasm. Its subcellular location is the nucleus. The catalysed reaction is S-ubiquitinyl-[E2 ubiquitin-conjugating enzyme]-L-cysteine + [acceptor protein]-L-lysine = [E2 ubiquitin-conjugating enzyme]-L-cysteine + N(6)-ubiquitinyl-[acceptor protein]-L-lysine.. It catalyses the reaction S-[NEDD8-protein]-yl-[E2 NEDD8-conjugating enzyme]-L-cysteine + [cullin]-L-lysine = [E2 NEDD8-conjugating enzyme]-L-cysteine + N(6)-[NEDD8-protein]-yl-[cullin]-L-lysine.. Its pathway is protein modification; protein ubiquitination. It functions in the pathway protein modification; protein neddylation. Catalytic component of multiple cullin-5-RING E3 ubiquitin-protein ligase complexes (ECS complexes), which mediate the ubiquitination and subsequent proteasomal degradation of target proteins. It is thereby involved in various biological processes, such as cell cycle progression, signal transduction and transcription. The functional specificity of the E3 ubiquitin-protein ligase ECS complexes depend on the variable SOCS box-containing substrate recognition component. Within ECS complexes, RNF7/RBX2 recruits the E2 ubiquitination enzyme to the complex via its RING-type and brings it into close proximity to the substrate. Catalytic subunit of various SOCS-containing ECS complexes, such as the ECS(SOCS7) complex, that regulate reelin signaling by mediating ubiquitination and degradation of DAB1. The ECS(SOCS2) complex mediates the ubiquitination and subsequent proteasomal degradation of phosphorylated EPOR and GHR. Promotes ubiquitination and degradation of NF1, thereby regulating Ras protein signal transduction. As part of the ECS(ASB9) complex, catalyzes ubiquitination and degradation of CKB. The ECS(SPSB3) complex catalyzes ubiquitination of nuclear CGAS. As part of the ECS(RAB40C) complex, mediates ANKRD28 ubiquitination and degradation, thereby inhibiting protein phosphatase 6 (PP6) complex activity and focal adhesion assembly during cell migration. As part of some ECS complex, catalyzes 'Lys-11'-linked ubiquitination and degradation of BTRC. ECS complexes and ARIH2 collaborate in tandem to mediate ubiquitination of target proteins; ARIH2 mediating addition of the first ubiquitin on CRLs targets. Specifically catalyzes the neddylation of CUL5 via its interaction with UBE2F. Does not catalyze neddylation of other cullins (CUL1, CUL2, CUL3, CUL4A or CUL4B). May play a role in protecting cells from apoptosis induced by redox agents. This is RING-box protein 2 from Mus musculus (Mouse).